The chain runs to 90 residues: MSVKIRLTRMGSKKKPFYRINVADSRAPRDGKFIETVGTYNPLVTENQVTLKEERVLEWLSNGAQPSDTVRNLLSKAGVMKKFHESKLSK.

Belongs to the bacterial ribosomal protein bS16 family.

This Lactococcus lactis subsp. cremoris (strain MG1363) protein is Small ribosomal subunit protein bS16.